The following is a 549-amino-acid chain: Glucose-6-phosphate isomerase (549 aa).

Glu355 functions as the Proton donor in the catalytic mechanism. Catalysis depends on residues His387 and Lys515.

Belongs to the GPI family.

The protein resides in the cytoplasm. The enzyme catalyses alpha-D-glucose 6-phosphate = beta-D-fructose 6-phosphate. Its pathway is carbohydrate biosynthesis; gluconeogenesis. It participates in carbohydrate degradation; glycolysis; D-glyceraldehyde 3-phosphate and glycerone phosphate from D-glucose: step 2/4. Functionally, catalyzes the reversible isomerization of glucose-6-phosphate to fructose-6-phosphate. This chain is Glucose-6-phosphate isomerase, found in Haemophilus influenzae (strain PittEE).